A 664-amino-acid polypeptide reads, in one-letter code: Putative carboxypeptidase suro-1 (664 aa).

The first 23 residues, 1–23 (MRYLCKSILLAVHTILLVGSVCC), serve as a signal peptide directing secretion. The propeptide at 24-110 (STDVHNTDDK…MSVPDVEKLI (87 aa)) is activation peptide. The region spanning 160-473 (DYASYADMVK…EGFREVVDAV (314 aa)) is the Peptidase M14 domain. Zn(2+) is bound by residues His-219 and Glu-222. Substrate is bound by residues 219-222 (HARE), Arg-281, and 306-307 (NR). His-361 lines the Zn(2+) pocket. 362 to 363 (SY) is a binding site for substrate. Catalysis depends on Glu-437, which acts as the Proton donor/acceptor. Low complexity predominate over residues 512–543 (ASQAAGSTTRSTTTLKTSTTSVSTTSEATSPS). The disordered stretch occupies residues 512–590 (ASQAAGSTTR…TTTTEEEDVT (79 aa)). Over residues 564 to 573 (PTPPMAPPIM) the composition is skewed to pro residues. Over residues 574–583 (SPSTEFSTTT) the composition is skewed to low complexity. Residues 621–657 (CRDMRYSCGFWLKNNKQVCEEQQSFMRAQCAYTCKFC) form the ShKT domain. Disulfide bonds link Cys-621/Cys-657, Cys-628/Cys-650, and Cys-639/Cys-654.

Belongs to the peptidase M14 family. Zn(2+) serves as cofactor. Localizes in stripes along the cuticle.

It is found in the cytoplasmic vesicle. The protein localises to the secreted. May play a role in processing or organization of cuticle collagen proteins, including rol-6 and col-19. This Caenorhabditis elegans protein is Putative carboxypeptidase suro-1.